We begin with the raw amino-acid sequence, 131 residues long: Olfactory receptor-like protein COR9 (131 aa).

Topologically, residues 1 to 16 are cytoplasmic; the sequence is VAICSPLLYSTVMTKR. Residues 17 to 41 traverse the membrane as a helical segment; it reads VCMQLVVGSYMGGLLNSLTHTCGLL. Topologically, residues 42–82 are extracellular; the sequence is GLPFCGPNVINHYFCDIPPLLQLACSDTHRNETLLLAFSAV. N72 is a glycosylation site (N-linked (GlcNAc...) asparagine). A helical membrane pass occupies residues 83 to 103; it reads IALFTLFVITASYMLILSVIL. At 104 to 116 the chain is on the cytoplasmic side; sequence KIQSDDGRKKTFH. A helical transmembrane segment spans residues 117–131; it reads TCASHLTAITIFFGS.

The protein belongs to the G-protein coupled receptor 1 family.

Its subcellular location is the cell membrane. Its function is as follows. Odorant receptor. The polypeptide is Olfactory receptor-like protein COR9 (COR9) (Gallus gallus (Chicken)).